The primary structure comprises 34 residues: Photosystem II reaction center protein Psb30 (34 aa).

Residues 6-26 (IVAQLLSLALVTLSGPAVIFL) form a helical membrane-spanning segment.

The protein belongs to the Psb30/Ycf12 family. In terms of assembly, PSII is composed of 1 copy each of membrane proteins PsbA, PsbB, PsbC, PsbD, PsbE, PsbF, PsbH, PsbI, PsbJ, PsbK, PsbL, PsbM, PsbT, PsbX, PsbY, PsbZ, Psb30/Ycf12, peripheral proteins of the oxygen-evolving complex and a large number of cofactors. It forms dimeric complexes.

It is found in the plastid. The protein localises to the chloroplast thylakoid membrane. Its function is as follows. A core subunit of photosystem II (PSII), probably helps stabilize the reaction center. The sequence is that of Photosystem II reaction center protein Psb30 from Emiliania huxleyi (Coccolithophore).